Reading from the N-terminus, the 191-residue chain is MRNNKNQMYIIKIFIAIAMITGIIFLYLFYSSLTTSKLKETSNMDDSLKIKFTLIEQQGKKFDSTNLQGYLSLIYFGTTYSLYDNQALKRVEDIIKILKRENILLQVVFITLDPEHDTSEVLKKYLEKIDSNFIGLTGRVQDIEQLAQQFKVFYTSKIFDVKTNEYALQHSNFVYLISSDGKILSHYYLGS.

Belongs to the SCO1/2 family.

This chain is SCO2-like protein RP031, found in Rickettsia prowazekii (strain Madrid E).